The sequence spans 373 residues: 4-hydroxy-3-methylbut-2-en-1-yl diphosphate synthase (flavodoxin) (373 aa).

[4Fe-4S] cluster-binding residues include C270, C273, C305, and E312.

This sequence belongs to the IspG family. Requires [4Fe-4S] cluster as cofactor.

It catalyses the reaction (2E)-4-hydroxy-3-methylbut-2-enyl diphosphate + oxidized [flavodoxin] + H2O + 2 H(+) = 2-C-methyl-D-erythritol 2,4-cyclic diphosphate + reduced [flavodoxin]. It functions in the pathway isoprenoid biosynthesis; isopentenyl diphosphate biosynthesis via DXP pathway; isopentenyl diphosphate from 1-deoxy-D-xylulose 5-phosphate: step 5/6. In terms of biological role, converts 2C-methyl-D-erythritol 2,4-cyclodiphosphate (ME-2,4cPP) into 1-hydroxy-2-methyl-2-(E)-butenyl 4-diphosphate. The polypeptide is 4-hydroxy-3-methylbut-2-en-1-yl diphosphate synthase (flavodoxin) (Erwinia tasmaniensis (strain DSM 17950 / CFBP 7177 / CIP 109463 / NCPPB 4357 / Et1/99)).